A 126-amino-acid chain; its full sequence is Acidic phospholipase A2 2 (126 aa).

A propeptide spanning residues 1 to 7 (SNRPMPL) is cleaved from the precursor. Disulfide bonds link Cys-18–Cys-78, Cys-33–Cys-125, Cys-35–Cys-51, Cys-50–Cys-106, Cys-57–Cys-99, Cys-67–Cys-92, and Cys-85–Cys-97. Ca(2+) is bound by residues Tyr-34, Gly-36, and Gly-38. Residue His-54 is part of the active site. Asp-55 lines the Ca(2+) pocket. The active site involves Asp-100.

This sequence belongs to the phospholipase A2 family. Group I subfamily. D49 sub-subfamily. In terms of assembly, heterodimer formed between two homologous isoforms: isoform 1 and isoform 2. It depends on Ca(2+) as a cofactor. Expressed by the venom gland.

It localises to the secreted. The catalysed reaction is a 1,2-diacyl-sn-glycero-3-phosphocholine + H2O = a 1-acyl-sn-glycero-3-phosphocholine + a fatty acid + H(+). In terms of biological role, PLA2 catalyzes the calcium-dependent hydrolysis of the 2-acyl groups in 3-sn-phosphoglycerides. The polypeptide is Acidic phospholipase A2 2 (Naja sagittifera (Andaman cobra)).